The following is a 1009-amino-acid chain: Protein-tyrosine kinase 2-beta (1009 aa).

Positions 39-359 (RILKVCFYSN…GYCRLQGEHK (321 aa)) constitute an FERM domain. Ser-361, Ser-375, and Ser-399 each carry phosphoserine. The residue at position 402 (Tyr-402) is a Phosphotyrosine; by autocatalysis. The 259-residue stretch at 425–683 (VVLNRILGEG…ELVCSLSDIY (259 aa)) folds into the Protein kinase domain. ATP contacts are provided by residues 431–439 (LGEGFFGEV), Lys-457, and 503–509 (ELYPYGE). Asp-549 serves as the catalytic Proton acceptor. A Phosphotyrosine modification is found at Tyr-579. Phosphotyrosine; by SRC, FYN and LCK is present on Tyr-580. The interval 696-728 (NARYRPPKILEPTTFQEPPPKPSRPKYRPPPQT) is disordered. Over residues 712 to 727 (EPPPKPSRPKYRPPPQ) the composition is skewed to pro residues. Residue Tyr-722 is modified to Phosphotyrosine. The residue at position 762 (Ser-762) is a Phosphoserine. The residue at position 765 (Thr-765) is a Phosphothreonine. The segment at 801-1009 (KIKMKQVLER…VANLAHPPAE (209 aa)) is interaction with TGFB1I1. At Tyr-834 the chain carries Phosphotyrosine. Ser-839 bears the Phosphoserine mark. Thr-842 is subject to Phosphothreonine. Residue Tyr-849 is modified to Phosphotyrosine. Position 866 is a phosphoserine (Ser-866). The tract at residues 868–1009 (QPTANLDRTD…VANLAHPPAE (142 aa)) is focal adhesion targeting (FAT). Phosphotyrosine is present on Tyr-881.

This sequence belongs to the protein kinase superfamily. Tyr protein kinase family. FAK subfamily. Homodimer, or homooligomer. Interacts with KCNA2. Interacts with NPHP1, ASAP1, ASAP2, ARHGAP26, SKAP2 and TGFB1I1. The Tyr-402 phosphorylated form interacts with SRC (via SH2 domain) and SRC family members. Forms a signaling complex with EPHA1, LCK and phosphatidylinositol 3-kinase; upon activation by EFNA1. Interacts with GRB2 (via SH2 domain). Interacts with P53/TP53 and MDM2. Interacts with MYLK. Interacts with BCAR1. Interacts with RB1CC1. Interacts with RHOU. Interacts with VAV1. Interacts with PDPK1. Interacts with DLG4. Interacts with LPXN and PTPN12. Interacts with SIRPA and SH2D3C. Interacts (hypophosphorylated) with PXN. Interacts with ARHGAP10. Phosphorylated on tyrosine residues in response to various stimuli that elevate the intracellular calcium concentration; this activation is indirect and may be mediated by production of reactive oxygen species (ROS). Tyr-402 is the major autophosphorylation site, but other kinases can also phosphorylate Tyr-402. Autophosphorylation occurs in trans, i.e. one subunit of the dimeric receptor phosphorylates tyrosine residues on the other subunit. Phosphorylation at Tyr-402 promotes interaction with SRC and SRC family members, leading to phosphorylation at Tyr-579; Tyr-580 and Tyr-881. Phosphorylation at Tyr-881 is important for interaction with GRB2. Phosphorylated on tyrosine residues upon activation of FGR and PKC. Recruitment by NPHP1 to cell matrix adhesions initiates Tyr-402 phosphorylation. In monocytes, adherence to substrata is required for tyrosine phosphorylation and kinase activation. Angiotensin II, thapsigargin and L-alpha-lysophosphatidic acid (LPA) also induce autophosphorylation and increase kinase activity. Phosphorylation by MYLK promotes ITGB2 activation and is thus essential to trigger neutrophil transmigration during lung injury. Dephosphorylated by PTPN12.

Its subcellular location is the cytoplasm. It localises to the perinuclear region. The protein resides in the cell membrane. The protein localises to the cell junction. It is found in the focal adhesion. Its subcellular location is the cell projection. It localises to the lamellipodium. The protein resides in the cell cortex. The protein localises to the nucleus. The enzyme catalyses L-tyrosyl-[protein] + ATP = O-phospho-L-tyrosyl-[protein] + ADP + H(+). With respect to regulation, activated in response to stimuli that lead to increased intracellular Ca(2+) levels; this activation is indirect and may be mediated by calcium-mediated production of reactive oxygen species (ROS). Activated by autophosphorylation at Tyr-402; this creates a binding site for SRC family kinases and leads to phosphorylation at additional tyrosine residues. Phosphorylation at Tyr-402, Tyr-579 and Tyr-580 is required for optimal kinase activity. Functionally, non-receptor protein-tyrosine kinase that regulates reorganization of the actin cytoskeleton, cell polarization, cell migration, adhesion, spreading and bone remodeling. Plays a role in the regulation of the humoral immune response, and is required for normal levels of marginal B-cells in the spleen and normal migration of splenic B-cells. Required for normal macrophage polarization and migration towards sites of inflammation. Regulates cytoskeleton rearrangement and cell spreading in T-cells, and contributes to the regulation of T-cell responses. Promotes osteoclastic bone resorption; this requires both PTK2B/PYK2 and SRC. May inhibit differentiation and activity of osteoprogenitor cells. Functions in signaling downstream of integrin and collagen receptors, immune receptors, G-protein coupled receptors (GPCR), cytokine, chemokine and growth factor receptors, and mediates responses to cellular stress. Forms multisubunit signaling complexes with SRC and SRC family members upon activation; this leads to the phosphorylation of additional tyrosine residues, creating binding sites for scaffold proteins, effectors and substrates. Regulates numerous signaling pathways. Promotes activation of phosphatidylinositol 3-kinase and of the AKT1 signaling cascade. Promotes activation of NOS3. Regulates production of the cellular messenger cGMP. Promotes activation of the MAP kinase signaling cascade, including activation of MAPK1/ERK2, MAPK3/ERK1 and MAPK8/JNK1. Promotes activation of Rho family GTPases, such as RHOA and RAC1. Recruits the ubiquitin ligase MDM2 to P53/TP53 in the nucleus, and thereby regulates P53/TP53 activity, P53/TP53 ubiquitination and proteasomal degradation. Acts as a scaffold, binding to both PDPK1 and SRC, thereby allowing SRC to phosphorylate PDPK1 at 'Tyr-9, 'Tyr-373', and 'Tyr-376'. Promotes phosphorylation of NMDA receptors by SRC family members, and thereby contributes to the regulation of NMDA receptor ion channel activity and intracellular Ca(2+) levels. May also regulate potassium ion transport by phosphorylation of potassium channel subunits. Phosphorylates SRC; this increases SRC kinase activity. Phosphorylates ASAP1, NPHP1, KCNA2 and SHC1. Promotes phosphorylation of ASAP2, RHOU and PXN; this requires both SRC and PTK2/PYK2. In Mus musculus (Mouse), this protein is Protein-tyrosine kinase 2-beta (Ptk2b).